Here is a 386-residue protein sequence, read N- to C-terminus: Heavy metal-associated isoprenylated plant protein 5 (386 aa).

A compositionally biased stretch (basic and acidic residues) spans 1–16 (MGEVQEGPKVEQEKKP). The interval 1–40 (MGEVQEGPKVEQEKKPAATVVPVETTDGKPKSGGGDSAAA) is disordered. The region spanning 49-112 (VSAFVYKVDM…KLEEKTKRKV (64 aa)) is the HMA 1 domain. Positions 60 and 63 each coordinate a metal cation. The segment at 129–153 (VGEKKADGGDKEAAPPAPAPAAPKE) is disordered. Residues 130 to 141 (GEKKADGGDKEA) show a composition bias toward basic and acidic residues. Positions 153–220 (ESVVPLKIRL…KLKRTVEPLV (68 aa)) constitute an HMA 2 domain. Residues Cys164 and Cys167 each coordinate a metal cation. Basic and acidic residues-rich tracts occupy residues 223-245 (KKDD…KKEA) and 252-297 (EAKK…KKDG). The segment at 223-301 (KKDDGAAENK…EKKKDGGGVP (79 aa)) is disordered. Cys383 is subject to Cysteine methyl ester. Cys383 is lipidated: S-farnesyl cysteine. The propeptide at 384-386 (SVM) is removed in mature form.

Belongs to the HIPP family. Efficiently farnesylated in vitro.

Heavy-metal-binding protein. Involved in disease resistance. This Arabidopsis thaliana (Mouse-ear cress) protein is Heavy metal-associated isoprenylated plant protein 5.